Here is a 238-residue protein sequence, read N- to C-terminus: Ribonuclease PH (238 aa).

Phosphate contacts are provided by residues arginine 86 and 124–126 (GTR).

This sequence belongs to the RNase PH family. As to quaternary structure, homohexameric ring arranged as a trimer of dimers.

It catalyses the reaction tRNA(n+1) + phosphate = tRNA(n) + a ribonucleoside 5'-diphosphate. Functionally, phosphorolytic 3'-5' exoribonuclease that plays an important role in tRNA 3'-end maturation. Removes nucleotide residues following the 3'-CCA terminus of tRNAs; can also add nucleotides to the ends of RNA molecules by using nucleoside diphosphates as substrates, but this may not be physiologically important. Probably plays a role in initiation of 16S rRNA degradation (leading to ribosome degradation) during starvation. In Salmonella agona (strain SL483), this protein is Ribonuclease PH.